The sequence spans 404 residues: Probable tRNA sulfurtransferase (404 aa).

The THUMP domain maps to 60–165 (RSVIEALKPV…DEAAYLSHED (106 aa)). ATP contacts are provided by residues 183–184 (ML), 208–209 (HF), R265, G287, and Q296.

The protein belongs to the ThiI family.

It is found in the cytoplasm. It carries out the reaction [ThiI sulfur-carrier protein]-S-sulfanyl-L-cysteine + a uridine in tRNA + 2 reduced [2Fe-2S]-[ferredoxin] + ATP + H(+) = [ThiI sulfur-carrier protein]-L-cysteine + a 4-thiouridine in tRNA + 2 oxidized [2Fe-2S]-[ferredoxin] + AMP + diphosphate. It catalyses the reaction [ThiS sulfur-carrier protein]-C-terminal Gly-Gly-AMP + S-sulfanyl-L-cysteinyl-[cysteine desulfurase] + AH2 = [ThiS sulfur-carrier protein]-C-terminal-Gly-aminoethanethioate + L-cysteinyl-[cysteine desulfurase] + A + AMP + 2 H(+). Its pathway is cofactor biosynthesis; thiamine diphosphate biosynthesis. In terms of biological role, catalyzes the ATP-dependent transfer of a sulfur to tRNA to produce 4-thiouridine in position 8 of tRNAs, which functions as a near-UV photosensor. Also catalyzes the transfer of sulfur to the sulfur carrier protein ThiS, forming ThiS-thiocarboxylate. This is a step in the synthesis of thiazole, in the thiamine biosynthesis pathway. The sulfur is donated as persulfide by IscS. This chain is Probable tRNA sulfurtransferase, found in Streptococcus equi subsp. equi (strain 4047).